A 446-amino-acid chain; its full sequence is Golgi reassembly-stacking protein 1 (446 aa).

Positions 1 to 20 (MGLGASSEQPAGGEGFHLHG) are disordered. G2 is lipidated: N-myristoyl glycine. PDZ GRASP-type domains follow at residues 14–104 (EGFH…FCSF) and 110–198 (HVWH…YGYL). Residues 14-214 (EGFHLHGVQE…PSSQHKKPPG (201 aa)) form a GRASP region. Residues H17, H19, and C102 each contribute to the Zn(2+) site. The segment at 189–201 (LGCGIGYGYLHRI) is essential for interaction with GOLGA2/GM130. Disordered stretches follow at residues 202-252 (PTQP…LGSR) and 343-446 (VSGP…EPGL). Residues T216, T220, and T224 each carry the phosphothreonine modification. The span at 343 to 354 (VSGPEDIGSSSS) shows a compositional bias: low complexity. Phosphoserine is present on residues S365, S367, and S376.

Belongs to the GORASP family. Homodimer. Forms higher-order oligomers under interphase but not mitotic conditions. Dimers of the protein on one membrane might be able to interact with dimers on another and so stack cisternae. Interacts with the C-terminus of GOLGA2/GM130 under both mitotic and non-mitotic conditions. The interaction is critical for the correct targeting of both proteins to the cis-Golgi. Interacts with TMED2 and TMED3. Phosphorylated by CDC2/B1 and PLK kinases during mitosis. Phosphorylation cycle correlates with the cisternal stacking cycle. Phosphorylation of the homodimer prevents the association of dimers into higher-order oligomers, leading to cisternal unstacking. Post-translationally, target for caspase-3 cleavage during apoptosis. The cleavage contributes to Golgi fragmentation and occurs very early in the execution phase of apoptosis. In terms of processing, myristoylated.

The protein localises to the golgi apparatus. The protein resides in the cis-Golgi network membrane. Functionally, key structural protein of the Golgi apparatus. The membrane cisternae of the Golgi apparatus adhere to each other to form stacks, which are aligned side by side to form the Golgi ribbon. Acting in concert with GORASP2/GRASP55, is required for the formation and maintenance of the Golgi ribbon, and may be dispensable for the formation of stacks. However, other studies suggest that GORASP1 plays an important role in assembly and membrane stacking of the cisternae, and in the reassembly of Golgi stacks after breakdown during mitosis. Caspase-mediated cleavage of GORASP1 is required for fragmentation of the Golgi during apoptosis. Also mediates, via its interaction with GOLGA2/GM130, the docking of transport vesicles with the Golgi membranes. Mediates ER stress-induced unconventional (ER/Golgi-independent) trafficking of core-glycosylated CFTR to cell membrane. The sequence is that of Golgi reassembly-stacking protein 1 (Gorasp1) from Mus musculus (Mouse).